Consider the following 444-residue polypeptide: Presenilin sel-12 (444 aa).

The Cytoplasmic portion of the chain corresponds to 1-45 (MPSTRRQQEGGGADAETHTVYGTNLITNRNSQEDENVVEEAELKY). A helical membrane pass occupies residues 46–66 (GASHVIHLFVPVSLCMALVVF). At 67 to 101 (TMNTITFYSQNNGRHLLYTPFVRETDSIVEKGLMS) the chain is on the lumenal side. The chain crosses the membrane as a helical span at residues 102-122 (LGNALVMLCVVVLMTVLLIVF). At 123–130 (YKYKFYKL) the chain is on the cytoplasmic side. A helical transmembrane segment spans residues 131–151 (IHGWLIVSSFLLLFLFTTIYV). Topologically, residues 152 to 163 (QEVLKSFDVSPS) are lumenal. A helical transmembrane segment spans residues 164–184 (ALLVLFGLGNYGVLGMMCIHW). Residues 185-189 (KGPLR) are Cytoplasmic-facing. Residues 190–210 (LQQFYLITMSALMALVFIKYL) form a helical membrane-spanning segment. The Lumenal segment spans residues 211 to 212 (PE). The helical transmembrane segment at 213–233 (WTVWFVLFVISVWDLVAVLTP) threads the bilayer. The active site involves Asp-226. The Cytoplasmic portion of the chain corresponds to 234–359 (KGPLRYLVET…RHEEEERGVK (126 aa)). The tract at residues 275-331 (TDPREPTSSDSNTSTAFPGEASCSSETPKRPKVKRIPQKVQIESNTTASTTQNSGVR) is disordered. Composition is skewed to polar residues over residues 282-300 (SSDS…CSSE) and 315-329 (QIES…QNSG). A helical transmembrane segment spans residues 360–380 (LGLGDFIFYSVLLGKASSYFD). Residue Asp-364 is part of the active site. Over 381 to 384 (WNTT) the chain is Lumenal. The helical transmembrane segment at 385–405 (IACYVAILIGLCFTLVLLAVF) threads the bilayer. Over 406–413 (KRALPALP) the chain is Cytoplasmic. Positions 410–412 (PAL) match the PAL motif. Positions 414–434 (ISIFSGLIFYFCTRWIITPFV) form an intramembrane region, helical. Over 435 to 444 (TQVSQKCLLY) the chain is Cytoplasmic.

The protein belongs to the peptidase A22A family. As to quaternary structure, homodimer. Component of the gamma-secretase complex, a complex probably composed of the presenilin homodimer (sel-12, hop-1 or spe-4), nicastrin (aph-2), aph-1 and pen-2. Interacts with sel-10. Expressed in most neurons.

Its subcellular location is the endoplasmic reticulum membrane. It localises to the golgi apparatus membrane. Its function is as follows. Probable catalytic subunit of the gamma-secretase complex, an endoprotease complex that catalyzes the intramembrane cleavage of integral membrane proteins such as Notch receptors (lin-12 or glp-1). Provides the major presenilin function compared to hop-1 and spe-4. Required cell-autonomously for correct neurite connectivity of the AIY cholinergic interneurons and their correct functioning in thermotaxis. Required for mesodermal patterning of muscle function. Promotes basement membrane gap formation during tissue remodeling. The chain is Presenilin sel-12 from Caenorhabditis elegans.